Reading from the N-terminus, the 515-residue chain is Glucose-6-phosphate 1-dehydrogenase (515 aa).

Residues Arg53 and Lys160 each contribute to the NADP(+) site. Substrate-binding residues include His190, Lys194, Glu228, and Asp247. His252 acts as the Proton acceptor in catalysis. A substrate-binding site is contributed by Lys352.

Belongs to the glucose-6-phosphate dehydrogenase family.

The catalysed reaction is D-glucose 6-phosphate + NADP(+) = 6-phospho-D-glucono-1,5-lactone + NADPH + H(+). Its pathway is carbohydrate degradation; pentose phosphate pathway; D-ribulose 5-phosphate from D-glucose 6-phosphate (oxidative stage): step 1/3. Catalyzes the oxidation of glucose 6-phosphate to 6-phosphogluconolactone. The chain is Glucose-6-phosphate 1-dehydrogenase from Treponema pallidum (strain Nichols).